Reading from the N-terminus, the 497-residue chain is Zinc metalloproteinase nas-28 (497 aa).

A signal peptide spans 1-14; it reads MFFPVVFFIPFVLG. The propeptide occupies 15 to 120; sequence APTQKALEKI…IENGNYRSKR (106 aa). Asn76 carries an N-linked (GlcNAc...) asparagine glycan. The region spanning 121 to 319 is the Peptidase M12A domain; sequence QAIVDTTNFW…IGVNKLYNCT (199 aa). 7 disulfide bridges follow: Cys164/Cys318, Cys185/Cys206, Cys328/Cys339, Cys331/Cys342, Cys344/Cys353, Cys364/Cys398, and Cys427/Cys447. His214 contacts Zn(2+). The active site involves Glu215. Zn(2+) is bound by residues His218 and His224. An N-linked (GlcNAc...) asparagine glycan is attached at Asn317. The EGF-like domain occupies 324-354; it reads IQMKCSNCGITDSRNCNQCKCPRYFTGASCD. Residues 364 to 483 form the CUB domain; it reads CNGAVLQATS…LTFSIQYRAV (120 aa). N-linked (GlcNAc...) asparagine glycosylation occurs at Asn394.

Zn(2+) is required as a cofactor.

The protein resides in the secreted. Metalloprotease. The sequence is that of Zinc metalloproteinase nas-28 (nas-28) from Caenorhabditis elegans.